The following is a 520-amino-acid chain: 2-methylcitrate dehydratase, mitochondrial (520 aa).

The N-terminal 37 residues, 1 to 37, are a transit peptide targeting the mitochondrion; it reads MRAFRSAANFGAASNIYRKSFTPASIASNRFVSARMS.

The protein belongs to the PrpD family. In terms of assembly, monomer.

The protein localises to the mitochondrion. The catalysed reaction is (2S,3S)-2-methylcitrate = 2-methyl-cis-aconitate + H2O. Its pathway is organic acid metabolism; propanoate degradation. Its activity is regulated as follows. Several bivalent metal ions, such as nickel, copper, zinc, mercury, and lead, inhibit the activity to some extent. Inhibited by structural analogs such as citrate, cis-aconitate, isocitrate, 2-methylisocitrate, tricarballylate and fluorocitrate, but not by trans-aconitate or adipate. In terms of biological role, component of the methylcitrate cycle that catalyzes the dehydration of 2-methylcitrate to 2-methyl-cis-aconitate. The methylcitrate cycle is a metabolic pathway for the consumption of propionic acid. In Yarrowia lipolytica (strain CLIB 122 / E 150) (Yeast), this protein is 2-methylcitrate dehydratase, mitochondrial.